The following is a 140-amino-acid chain: Large ribosomal subunit protein uL16 (140 aa).

Belongs to the universal ribosomal protein uL16 family. Part of the 50S ribosomal subunit.

Its function is as follows. Binds 23S rRNA and is also seen to make contacts with the A and possibly P site tRNAs. In Phytoplasma australiense, this protein is Large ribosomal subunit protein uL16.